We begin with the raw amino-acid sequence, 433 residues long: MRAELLAVGDELLYGDIVNGNAAWLGRQLADVGVTVTTSTVVGDDIDMIATAIRVALDRADVVIMTGGLGPTQDDLTREGIAAAAGVGLRRDDFLESMLRRRFRDMGRGDGGRRVPQMNYRQADLPEGAQPLPNGTGTAPGIRMEIGTGVVYAMPGVPFEMNGMFTASVLPDILRRAGQPAVVVHRVLRTAGMWESAVAEALADEVDRLARIGNPRIAFLASGGQTRVRITARARDRAEAEMLIAPVETAARTALGAGVYGGADDSLEGVVLGLLVQRSATLAVAESITGGLLAGRLTDVPGASAAFRGGIVSYATEVKASALGVDEGLLAAEGAVSSRTAAAMAAGVRSRLGATYGLATTGVAGPQPQEDKPVGTLHIGLAGPDGTVTRSVRLPGDRPRIRTYAVVSALDLVRRMLAGLPNSEMTTTGDGAP.

It belongs to the CinA family.

The protein is CinA-like protein of Frankia casuarinae (strain DSM 45818 / CECT 9043 / HFP020203 / CcI3).